The chain runs to 222 residues: Beta-amylase (222 aa).

Substrate is bound at residue Thr-36. Glu-74 serves as the catalytic Proton acceptor. Residues 75-76 (NA) and Arg-114 each bind substrate.

This sequence belongs to the glycosyl hydrolase 14 family.

The enzyme catalyses Hydrolysis of (1-&gt;4)-alpha-D-glucosidic linkages in polysaccharides so as to remove successive maltose units from the non-reducing ends of the chains.. The chain is Beta-amylase (BMY1) from Secale cereale (Rye).